Reading from the N-terminus, the 1543-residue chain is ATP-binding cassette sub-family A member 10 (1543 aa).

Transmembrane regions (helical) follow at residues 83–103 (YWLK…IEVT), 135–155 (WFHF…SLNV), 185–205 (ICFI…IPIV), 210–230 (FMVI…LAFL), 240–260 (LAGL…FTVL), 264–284 (LPLS…TAGM), and 310–330 (IATF…TLYF). The ABC transporter 1 domain occupies 391–626 (IRIRNVIKEY…WGIGYHLSLH (236 aa)). An ATP-binding site is contributed by 427-434 (GHNGAGKS). 8 helical membrane passes run 774 to 794 (LLCL…EKIM), 890 to 910 (LNCF…IFNF), 926 to 946 (IVLD…TNCV), 985 to 1005 (IPLY…IFLG), 1014 to 1034 (FVLV…TYVL), 1046 to 1066 (GFWS…MVST), 1073 to 1093 (LILC…MLLI), and 1113 to 1133 (KTIL…LFVI). Basic and acidic residues predominate over residues 1153 to 1164 (ISPRSRETHPNP). Positions 1153 to 1177 (ISPRSRETHPNPEEPEEEDEDVQAE) are disordered. Residues 1165-1174 (EEPEEEDEDV) are compositionally biased toward acidic residues. The 235-residue stretch at 1206–1440 (YETKKSCFST…FGRDYLLEIK (235 aa)) folds into the ABC transporter 2 domain. Position 1239-1246 (1239-1246 (GHNGAGKS)) interacts with ATP.

It belongs to the ABC transporter superfamily. ABCA family. In terms of tissue distribution, widely expressed. Highly expressed in skeletal muscle, heart, brain and gastrointestinal tract.

Its subcellular location is the membrane. Functionally, probable transporter which may play a role in macrophage lipid transport and homeostasis. In Homo sapiens (Human), this protein is ATP-binding cassette sub-family A member 10 (ABCA10).